The sequence spans 367 residues: MNLADKVLVVNDNLPIRTNKPVHSGKVRSVYWLTEEDSARLIKDKGYDVPADAPLAIMVISDRISAFDCVWQGENGLNGVPGKGTALNAISNHWFKLFKDKGLADSHILDIPHPLVWIVQKARPVMIEAIARQYITGSMWRSYTKGEREFCGITIPEGLEKDQKLPELLITPSTKGVLTGLEGVPEADDVNVSRSDIERHVEGFNFTKLADIDLYEKLLKEGFDVISDALAEHDQVFVDTKFEFGYVNDAAGNEKLIYMDEVGTPDSSRIWDGSSHRDGKIIEQSKEGFRQWLLNHFPDSDILLNKNRMEERFALARDNKLPESVMMDISNTYVGIAEKVIGSKLKISENPKQEIIDILREEYQLIV.

The protein belongs to the SAICAR synthetase family.

It catalyses the reaction 5-amino-1-(5-phospho-D-ribosyl)imidazole-4-carboxylate + L-aspartate + ATP = (2S)-2-[5-amino-1-(5-phospho-beta-D-ribosyl)imidazole-4-carboxamido]succinate + ADP + phosphate + 2 H(+). It participates in purine metabolism; IMP biosynthesis via de novo pathway; 5-amino-1-(5-phospho-D-ribosyl)imidazole-4-carboxamide from 5-amino-1-(5-phospho-D-ribosyl)imidazole-4-carboxylate: step 1/2. This is Phosphoribosylaminoimidazole-succinocarboxamide synthase from Shewanella halifaxensis (strain HAW-EB4).